Here is a 197-residue protein sequence, read N- to C-terminus: Putative phosphopantothenoylcysteine decarboxylase (197 aa).

Residues F52 and 102-105 each bind FMN; that span reads SANT. Residue N139 participates in substrate binding. The Proton donor role is filled by C174.

It belongs to the HFCD (homooligomeric flavin containing Cys decarboxylase) superfamily. In terms of assembly, homotrimer. FMN is required as a cofactor.

It catalyses the reaction N-[(R)-4-phosphopantothenoyl]-L-cysteine + H(+) = (R)-4'-phosphopantetheine + CO2. It functions in the pathway cofactor biosynthesis; coenzyme A biosynthesis; CoA from (R)-pantothenate: step 3/5. Functionally, necessary for the biosynthesis of coenzyme A. Catalyzes the decarboxylation of 4-phosphopantothenoylcysteine to form 4'-phosphopantotheine. The polypeptide is Putative phosphopantothenoylcysteine decarboxylase (ppcdc) (Dictyostelium discoideum (Social amoeba)).